The sequence spans 331 residues: 6-phosphogluconolactonase (331 aa).

An N6-acetyllysine modification is found at Lys-287.

This sequence belongs to the cycloisomerase 2 family.

The catalysed reaction is 6-phospho-D-glucono-1,5-lactone + H2O = 6-phospho-D-gluconate + H(+). The protein operates within carbohydrate degradation; pentose phosphate pathway; D-ribulose 5-phosphate from D-glucose 6-phosphate (oxidative stage): step 2/3. In terms of biological role, catalyzes the hydrolysis of 6-phosphogluconolactone to 6-phosphogluconate. This Shigella sonnei (strain Ss046) protein is 6-phosphogluconolactonase.